Reading from the N-terminus, the 398-residue chain is UDP-N-acetylglucosamine--N-acetylmuramyl-(pentapeptide) pyrophosphoryl-undecaprenol N-acetylglucosamine transferase (398 aa).

UDP-N-acetyl-alpha-D-glucosamine is bound by residues 15 to 17 (TGG), Asn125, Arg168, Ser196, and Gln297.

The protein belongs to the glycosyltransferase 28 family. MurG subfamily.

The protein localises to the cell inner membrane. The enzyme catalyses di-trans,octa-cis-undecaprenyl diphospho-N-acetyl-alpha-D-muramoyl-L-alanyl-D-glutamyl-meso-2,6-diaminopimeloyl-D-alanyl-D-alanine + UDP-N-acetyl-alpha-D-glucosamine = di-trans,octa-cis-undecaprenyl diphospho-[N-acetyl-alpha-D-glucosaminyl-(1-&gt;4)]-N-acetyl-alpha-D-muramoyl-L-alanyl-D-glutamyl-meso-2,6-diaminopimeloyl-D-alanyl-D-alanine + UDP + H(+). The protein operates within cell wall biogenesis; peptidoglycan biosynthesis. Cell wall formation. Catalyzes the transfer of a GlcNAc subunit on undecaprenyl-pyrophosphoryl-MurNAc-pentapeptide (lipid intermediate I) to form undecaprenyl-pyrophosphoryl-MurNAc-(pentapeptide)GlcNAc (lipid intermediate II). This Erythrobacter litoralis (strain HTCC2594) protein is UDP-N-acetylglucosamine--N-acetylmuramyl-(pentapeptide) pyrophosphoryl-undecaprenol N-acetylglucosamine transferase.